The following is a 294-amino-acid chain: Probable 2-(5''-triphosphoribosyl)-3'-dephosphocoenzyme-A synthase (294 aa).

It belongs to the CitG/MdcB family.

It catalyses the reaction 3'-dephospho-CoA + ATP = 2'-(5''-triphospho-alpha-D-ribosyl)-3'-dephospho-CoA + adenine. The polypeptide is Probable 2-(5''-triphosphoribosyl)-3'-dephosphocoenzyme-A synthase (Streptococcus pyogenes serotype M49 (strain NZ131)).